We begin with the raw amino-acid sequence, 505 residues long: Putative thymidine phosphorylase (505 aa).

This sequence belongs to the thymidine/pyrimidine-nucleoside phosphorylase family. Type 2 subfamily.

The catalysed reaction is thymidine + phosphate = 2-deoxy-alpha-D-ribose 1-phosphate + thymine. This Parvibaculum lavamentivorans (strain DS-1 / DSM 13023 / NCIMB 13966) protein is Putative thymidine phosphorylase.